The following is a 171-amino-acid chain: Transcription factor E (171 aa).

The region spanning 5 to 88 (YEDPFIRIAV…RWRSRREEVE (84 aa)) is the HTH TFE/IIEalpha-type domain.

This sequence belongs to the TFE family. In terms of assembly, monomer. Interaction with RNA polymerase subunits RpoF and RpoE is necessary for Tfe stimulatory transcription activity. Able to interact with Tbp and RNA polymerase in the absence of DNA promoter. Interacts both with the preinitiation and elongation complexes.

Transcription factor that plays a role in the activation of archaeal genes transcribed by RNA polymerase. Facilitates transcription initiation by enhancing TATA-box recognition by TATA-box-binding protein (Tbp), and transcription factor B (Tfb) and RNA polymerase recruitment. Not absolutely required for transcription in vitro, but particularly important in cases where Tbp or Tfb function is not optimal. It dynamically alters the nucleic acid-binding properties of RNA polymerases by stabilizing the initiation complex and destabilizing elongation complexes. Seems to translocate with the RNA polymerase following initiation and acts by binding to the non template strand of the transcription bubble in elongation complexes. The polypeptide is Transcription factor E (Cenarchaeum symbiosum (strain A)).